Reading from the N-terminus, the 173-residue chain is Cytochrome c homolog (173 aa).

Residues 1 to 8 (MSGKELNK) are Cytoplasmic-facing. The chain crosses the membrane as a helical; Signal-anchor span at residues 9–29 (IVAAILFASLIAMMVGFIANI). Residues 30–173 (LYKPVLEPKH…LFLKTYVHDK (144 aa)) are Periplasmic-facing. Residues Cys-82, Cys-85, His-86, and Met-148 each coordinate heme c.

The protein belongs to the cytochrome c family. Post-translationally, binds 1 heme c group covalently per subunit.

It is found in the cell membrane. May be involved in electron transfer from bc1 complex to aa3. This chain is Cytochrome c homolog (cycM), found in Rickettsia bellii (strain RML369-C).